The sequence spans 425 residues: Enolase (425 aa).

Gln-163 contacts (2R)-2-phosphoglycerate. Residue Glu-205 is the Proton donor of the active site. Residues Asp-242, Glu-285, and Asp-312 each contribute to the Mg(2+) site. Residues Lys-337, Arg-366, Ser-367, and Lys-388 each contribute to the (2R)-2-phosphoglycerate site. The Proton acceptor role is filled by Lys-337.

This sequence belongs to the enolase family. Requires Mg(2+) as cofactor.

Its subcellular location is the cytoplasm. It localises to the secreted. It is found in the cell surface. The enzyme catalyses (2R)-2-phosphoglycerate = phosphoenolpyruvate + H2O. It participates in carbohydrate degradation; glycolysis; pyruvate from D-glyceraldehyde 3-phosphate: step 4/5. Its function is as follows. Catalyzes the reversible conversion of 2-phosphoglycerate (2-PG) into phosphoenolpyruvate (PEP). It is essential for the degradation of carbohydrates via glycolysis. In Jannaschia sp. (strain CCS1), this protein is Enolase.